The chain runs to 122 residues: Small ribosomal subunit protein uS13 (122 aa).

The interval 94 to 122 (RGLPVRGQKTKTNARTRKGPRKTVAGKRK) is disordered.

This sequence belongs to the universal ribosomal protein uS13 family. In terms of assembly, part of the 30S ribosomal subunit. Forms a loose heterodimer with protein S19. Forms two bridges to the 50S subunit in the 70S ribosome.

Functionally, located at the top of the head of the 30S subunit, it contacts several helices of the 16S rRNA. In the 70S ribosome it contacts the 23S rRNA (bridge B1a) and protein L5 of the 50S subunit (bridge B1b), connecting the 2 subunits; these bridges are implicated in subunit movement. Contacts the tRNAs in the A and P-sites. This chain is Small ribosomal subunit protein uS13, found in Syntrophotalea carbinolica (strain DSM 2380 / NBRC 103641 / GraBd1) (Pelobacter carbinolicus).